The primary structure comprises 352 residues: Protein-glutamate methylesterase/protein-glutamine glutaminase 2 (352 aa).

Residues 1–116 (MVVDDSAVVR…KQFLTDSADE (116 aa)) form the Response regulatory domain. Residue D50 is modified to 4-aspartylphosphate. One can recognise a CheB-type methylesterase domain in the interval 162–352 (AQTTERIVAI…MAREIVTQLQ (191 aa)). Active-site residues include S174, H200, and D296.

It belongs to the CheB family. Post-translationally, phosphorylated by CheA. Phosphorylation of the N-terminal regulatory domain activates the methylesterase activity.

It is found in the cytoplasm. The enzyme catalyses [protein]-L-glutamate 5-O-methyl ester + H2O = L-glutamyl-[protein] + methanol + H(+). It carries out the reaction L-glutaminyl-[protein] + H2O = L-glutamyl-[protein] + NH4(+). Functionally, involved in chemotaxis. Part of a chemotaxis signal transduction system that modulates chemotaxis in response to various stimuli. Catalyzes the demethylation of specific methylglutamate residues introduced into the chemoreceptors (methyl-accepting chemotaxis proteins or MCP) by CheR. Also mediates the irreversible deamidation of specific glutamine residues to glutamic acid. The sequence is that of Protein-glutamate methylesterase/protein-glutamine glutaminase 2 from Xanthomonas euvesicatoria pv. vesicatoria (strain 85-10) (Xanthomonas campestris pv. vesicatoria).